The chain runs to 466 residues: Soluble pyridine nucleotide transhydrogenase (466 aa).

36–45 (ERYQNVGGGC) is an FAD binding site.

The protein belongs to the class-I pyridine nucleotide-disulfide oxidoreductase family. It depends on FAD as a cofactor.

Its subcellular location is the cytoplasm. It carries out the reaction NAD(+) + NADPH = NADH + NADP(+). Functionally, conversion of NADPH, generated by peripheral catabolic pathways, to NADH, which can enter the respiratory chain for energy generation. The protein is Soluble pyridine nucleotide transhydrogenase of Escherichia coli O6:K15:H31 (strain 536 / UPEC).